The chain runs to 428 residues: Enolase (428 aa).

(2R)-2-phosphoglycerate is bound at residue Q163. E205 serves as the catalytic Proton donor. The Mg(2+) site is built by D242, E286, and D313. 4 residues coordinate (2R)-2-phosphoglycerate: K338, R367, S368, and K389. Catalysis depends on K338, which acts as the Proton acceptor.

Belongs to the enolase family. The cofactor is Mg(2+).

It localises to the cytoplasm. It is found in the secreted. The protein localises to the cell surface. It catalyses the reaction (2R)-2-phosphoglycerate = phosphoenolpyruvate + H2O. Its pathway is carbohydrate degradation; glycolysis; pyruvate from D-glyceraldehyde 3-phosphate: step 4/5. Its function is as follows. Catalyzes the reversible conversion of 2-phosphoglycerate (2-PG) into phosphoenolpyruvate (PEP). It is essential for the degradation of carbohydrates via glycolysis. In Acidovorax ebreus (strain TPSY) (Diaphorobacter sp. (strain TPSY)), this protein is Enolase.